Consider the following 183-residue polypeptide: Ribulose bisphosphate carboxylase small subunit, chloroplastic 1 (183 aa).

The transit peptide at 1–58 directs the protein to the chloroplast; it reads MASSMLSNAAMATTAATAGAQASMVAPFNGLKSFATFPITKKSSNDFSSLPSNGGRVQ.

This sequence belongs to the RuBisCO small chain family. As to quaternary structure, heterohexadecamer of 8 large and 8 small subunits.

The protein resides in the plastid. Its subcellular location is the chloroplast. Functionally, ruBisCO catalyzes two reactions: the carboxylation of D-ribulose 1,5-bisphosphate, the primary event in carbon dioxide fixation, as well as the oxidative fragmentation of the pentose substrate. Both reactions occur simultaneously and in competition at the same active site. Although the small subunit is not catalytic it is essential for maximal activity. The protein is Ribulose bisphosphate carboxylase small subunit, chloroplastic 1 of Amaranthus hypochondriacus (Prince-of-Wales feather).